A 396-amino-acid chain; its full sequence is Tryptophan synthase beta chain (396 aa).

K88 is subject to N6-(pyridoxal phosphate)lysine.

This sequence belongs to the TrpB family. In terms of assembly, tetramer of two alpha and two beta chains. Requires pyridoxal 5'-phosphate as cofactor.

It catalyses the reaction (1S,2R)-1-C-(indol-3-yl)glycerol 3-phosphate + L-serine = D-glyceraldehyde 3-phosphate + L-tryptophan + H2O. The protein operates within amino-acid biosynthesis; L-tryptophan biosynthesis; L-tryptophan from chorismate: step 5/5. Functionally, the beta subunit is responsible for the synthesis of L-tryptophan from indole and L-serine. The protein is Tryptophan synthase beta chain of Shewanella baltica (strain OS155 / ATCC BAA-1091).